The following is a 176-amino-acid chain: uncharacterized protein (176 aa).

The span at 87-100 shows a compositional bias: low complexity; sequence ASASSQLRASRVQS. A disordered region spans residues 87–109; sequence ASASSQLRASRVQSGTRQSARAG.

This is an uncharacterized protein from Homo sapiens (Human).